We begin with the raw amino-acid sequence, 162 residues long: Protein-export protein SecB 2 (162 aa).

The protein belongs to the SecB family. As to quaternary structure, homotetramer, a dimer of dimers. One homotetramer interacts with 1 SecA dimer.

It localises to the cytoplasm. Its function is as follows. One of the proteins required for the normal export of preproteins out of the cell cytoplasm. It is a molecular chaperone that binds to a subset of precursor proteins, maintaining them in a translocation-competent state. It also specifically binds to its receptor SecA. This Polaromonas naphthalenivorans (strain CJ2) protein is Protein-export protein SecB 2.